A 372-amino-acid polypeptide reads, in one-letter code: NAD(P)H-quinone oxidoreductase subunit 1 (372 aa).

8 helical membrane-spanning segments follow: residues 27–47, 97–117, 128–148, 166–186, 204–224, 266–286, 308–328, and 347–367; these read LLWIPLPMLLVLVSAVIGVLV, VLFTVGPILVLVPVILSWLIV, VGIGIFLWIALSSIQPIGLLM, AAQSISYEIPLALAVLAIVMM, FLSWNIWRQPVGFIIFWICAL, VLSALLVSVLYLGGWGFPISI, SLGIVMTILKAYLLVFLAILL, and FLLPISLVNLLVTASLKLAFP.

The protein belongs to the complex I subunit 1 family. As to quaternary structure, NDH-1 is composed of at least 11 different subunits.

The protein resides in the cellular thylakoid membrane. The catalysed reaction is a plastoquinone + NADH + (n+1) H(+)(in) = a plastoquinol + NAD(+) + n H(+)(out). The enzyme catalyses a plastoquinone + NADPH + (n+1) H(+)(in) = a plastoquinol + NADP(+) + n H(+)(out). NDH-1 shuttles electrons from an unknown electron donor, via FMN and iron-sulfur (Fe-S) centers, to quinones in the respiratory and/or the photosynthetic chain. The immediate electron acceptor for the enzyme in this species is believed to be plastoquinone. Couples the redox reaction to proton translocation, and thus conserves the redox energy in a proton gradient. In Prochlorococcus marinus (strain NATL2A), this protein is NAD(P)H-quinone oxidoreductase subunit 1.